Here is a 500-residue protein sequence, read N- to C-terminus: L-arabinose isomerase (500 aa).

Mn(2+)-binding residues include glutamate 306, glutamate 333, histidine 350, and histidine 450.

Belongs to the arabinose isomerase family. As to quaternary structure, homohexamer. It depends on Mn(2+) as a cofactor.

The enzyme catalyses beta-L-arabinopyranose = L-ribulose. Its pathway is carbohydrate degradation; L-arabinose degradation via L-ribulose; D-xylulose 5-phosphate from L-arabinose (bacterial route): step 1/3. Functionally, catalyzes the conversion of L-arabinose to L-ribulose. This Salmonella arizonae (strain ATCC BAA-731 / CDC346-86 / RSK2980) protein is L-arabinose isomerase.